We begin with the raw amino-acid sequence, 528 residues long: GMP synthase [glutamine-hydrolyzing] (528 aa).

Residues 13–204 enclose the Glutamine amidotransferase type-1 domain; that stretch reads SILILDFGSQ…VYSIAKCKAD (192 aa). C90 acts as the Nucleophile in catalysis. Catalysis depends on residues H178 and E180. The region spanning 205–403 is the GMPS ATP-PPase domain; sequence WTTETFLEET…LGLPDEIIKR (199 aa). ATP is bound at residue 232-238; the sequence is SGGVDSS.

Homodimer.

The enzyme catalyses XMP + L-glutamine + ATP + H2O = GMP + L-glutamate + AMP + diphosphate + 2 H(+). It participates in purine metabolism; GMP biosynthesis; GMP from XMP (L-Gln route): step 1/1. Catalyzes the synthesis of GMP from XMP. This Prochlorococcus marinus subsp. pastoris (strain CCMP1986 / NIES-2087 / MED4) protein is GMP synthase [glutamine-hydrolyzing].